The primary structure comprises 473 residues: Isocitrate dehydrogenase [NADP] (473 aa).

Thr104 is an NADP(+) binding site. The D-threo-isocitrate site is built by Ser113, Asn115, Arg119, Arg129, and Arg153. Asp362 contacts Mg(2+). NADP(+) contacts are provided by residues 394–400 (HGTAPKH), Asn407, Tyr446, and Arg450.

The protein belongs to the isocitrate and isopropylmalate dehydrogenases family. As to quaternary structure, homodimer. The cofactor is Mg(2+). Mn(2+) is required as a cofactor.

The enzyme catalyses D-threo-isocitrate + NADP(+) = 2-oxoglutarate + CO2 + NADPH. Inhibited by either oxaloacetate or glyoxylate. Also inhibited by the adenine nucleotides AMP, ADP and ATP and by NADPH, which inhibits the activity by 28% when it is added to the assay mixture at 0.25 mM. Catalyzes the oxidative decarboxylation of isocitrate to 2-oxoglutarate and carbon dioxide with the concomitant reduction of NADP(+). This chain is Isocitrate dehydrogenase [NADP], found in Nostoc sp. (strain PCC 7120 / SAG 25.82 / UTEX 2576).